The following is a 125-amino-acid chain: Large ribosomal subunit protein bL21 (125 aa).

Over residues 75-89 (FKKRRRQNSKRKRGH) the composition is skewed to basic residues. Disordered stretches follow at residues 75 to 94 (FKKRRRQNSKRKRGHRQDLT) and 103 to 125 (AGGASPAAAAASSETPAASAPEA). Residues 106-125 (ASPAAAAASSETPAASAPEA) show a composition bias toward low complexity.

The protein belongs to the bacterial ribosomal protein bL21 family. As to quaternary structure, part of the 50S ribosomal subunit. Contacts protein L20.

This protein binds to 23S rRNA in the presence of protein L20. The sequence is that of Large ribosomal subunit protein bL21 from Methylocella silvestris (strain DSM 15510 / CIP 108128 / LMG 27833 / NCIMB 13906 / BL2).